Here is a 443-residue protein sequence, read N- to C-terminus: ATP-dependent protease ATPase subunit HslU (443 aa).

ATP-binding positions include isoleucine 18, 60–65 (GVGKTE), aspartate 256, glutamate 321, and arginine 393.

It belongs to the ClpX chaperone family. HslU subfamily. A double ring-shaped homohexamer of HslV is capped on each side by a ring-shaped HslU homohexamer. The assembly of the HslU/HslV complex is dependent on binding of ATP.

It localises to the cytoplasm. Functionally, ATPase subunit of a proteasome-like degradation complex; this subunit has chaperone activity. The binding of ATP and its subsequent hydrolysis by HslU are essential for unfolding of protein substrates subsequently hydrolyzed by HslV. HslU recognizes the N-terminal part of its protein substrates and unfolds these before they are guided to HslV for hydrolysis. The chain is ATP-dependent protease ATPase subunit HslU from Shigella boydii serotype 18 (strain CDC 3083-94 / BS512).